We begin with the raw amino-acid sequence, 618 residues long: UvrABC system protein C (618 aa).

One can recognise a GIY-YIG domain in the interval 13–92; the sequence is DKPGVYLMKN…IKKYRPKYNI (80 aa). Residues 204 to 239 enclose the UVR domain; that stretch reads LDIVENFKLNMEKAAENLEFEKAAMLRDKINIIEKI.

It belongs to the UvrC family. Interacts with UvrB in an incision complex.

Its subcellular location is the cytoplasm. Its function is as follows. The UvrABC repair system catalyzes the recognition and processing of DNA lesions. UvrC both incises the 5' and 3' sides of the lesion. The N-terminal half is responsible for the 3' incision and the C-terminal half is responsible for the 5' incision. This Clostridium botulinum (strain Kyoto / Type A2) protein is UvrABC system protein C.